The primary structure comprises 498 residues: NAD(P)H-quinone oxidoreductase chain 4, chloroplastic (498 aa).

The next 14 membrane-spanning stretches (helical) occupy residues 4–24 (FPWL…IVLF), 37–57 (YCIC…HFEL), 80–100 (FGID…TTLA), 112–129 (KLFY…LGTF), 134–154 (ILLF…LLSM), 167–187 (FILY…GMSL), 208–228 (ALEI…SPII), 242–262 (HYST…YGLV), 272–292 (AHSI…IYAA), 305–325 (IAYS…SISE), 330–350 (GAIL…FLAG), 386–406 (LALP…GIIT), 416–436 (ILIT…SLSI), and 463–483 (FISI…DFIF).

This sequence belongs to the complex I subunit 4 family.

It localises to the plastid. It is found in the chloroplast thylakoid membrane. The catalysed reaction is a plastoquinone + NADH + (n+1) H(+)(in) = a plastoquinol + NAD(+) + n H(+)(out). The enzyme catalyses a plastoquinone + NADPH + (n+1) H(+)(in) = a plastoquinol + NADP(+) + n H(+)(out). The protein is NAD(P)H-quinone oxidoreductase chain 4, chloroplastic of Phaseolus vulgaris (Kidney bean).